The sequence spans 144 residues: Large ribosomal subunit protein uL15 (144 aa).

Positions 1–53 (MRLNTLSPAEGAKHAPKRLGRGIGSGLGKTGGRGHKGQNSRSGGGVRRGFEGG) are disordered. The segment covering 21–31 (RGIGSGLGKTG) has biased composition (gly residues).

This sequence belongs to the universal ribosomal protein uL15 family. Part of the 50S ribosomal subunit.

In terms of biological role, binds to the 23S rRNA. The polypeptide is Large ribosomal subunit protein uL15 (Pectobacterium atrosepticum (strain SCRI 1043 / ATCC BAA-672) (Erwinia carotovora subsp. atroseptica)).